The primary structure comprises 315 residues: tRNA dimethylallyltransferase (315 aa).

Gly-13–Thr-20 is a binding site for ATP. Substrate is bound at residue Thr-15 to Thr-20. The interaction with substrate tRNA stretch occupies residues Asp-38–Leu-41.

This sequence belongs to the IPP transferase family. Monomer. Requires Mg(2+) as cofactor.

The enzyme catalyses adenosine(37) in tRNA + dimethylallyl diphosphate = N(6)-dimethylallyladenosine(37) in tRNA + diphosphate. Its function is as follows. Catalyzes the transfer of a dimethylallyl group onto the adenine at position 37 in tRNAs that read codons beginning with uridine, leading to the formation of N6-(dimethylallyl)adenosine (i(6)A). The protein is tRNA dimethylallyltransferase of Herpetosiphon aurantiacus (strain ATCC 23779 / DSM 785 / 114-95).